The primary structure comprises 79 residues: MDISKMDRYAAPVHFSSLPLLATVLCGVGLLLLAAFTMLQVTSTKYNRNVFKELFIAATSSIFLGFGSVFLLLWVGIYV.

2 helical membrane-spanning segments follow: residues leucine 18–methionine 38 and phenylalanine 55–valine 75.

It belongs to the OST5 family. As to quaternary structure, component of the oligosaccharyltransferase (OST) complex.

It localises to the membrane. It participates in protein modification; protein glycosylation. Functionally, subunit of the oligosaccharyl transferase (OST) complex that catalyzes the initial transfer of a defined glycan (Glc(3)Man(9)GlcNAc(2) in eukaryotes) from the lipid carrier dolichol-pyrophosphate to an asparagine residue within an Asn-X-Ser/Thr consensus motif in nascent polypeptide chains, the first step in protein N-glycosylation. N-glycosylation occurs cotranslationally and the complex associates with the Sec61 complex at the channel-forming translocon complex that mediates protein translocation across the endoplasmic reticulum (ER). All subunits are required for a maximal enzyme activity. The chain is Dolichyl-diphosphooligosaccharide--protein glycosyltransferase subunit TMEM258 from Caenorhabditis briggsae.